We begin with the raw amino-acid sequence, 415 residues long: Adenosylhomocysteinase (415 aa).

Positions 53, 124, and 147 each coordinate substrate. An NAD(+)-binding site is contributed by 148–150 (TTT). K177 and D181 together coordinate substrate. Residues N182, 211–216 (GYGWVG), E234, N269, 290–292 (SGH), and N337 contribute to the NAD(+) site.

Belongs to the adenosylhomocysteinase family. The cofactor is NAD(+).

The protein localises to the cytoplasm. It carries out the reaction S-adenosyl-L-homocysteine + H2O = L-homocysteine + adenosine. It functions in the pathway amino-acid biosynthesis; L-homocysteine biosynthesis; L-homocysteine from S-adenosyl-L-homocysteine: step 1/1. Its function is as follows. May play a key role in the regulation of the intracellular concentration of adenosylhomocysteine. The chain is Adenosylhomocysteinase from Sulfurisphaera tokodaii (strain DSM 16993 / JCM 10545 / NBRC 100140 / 7) (Sulfolobus tokodaii).